The chain runs to 216 residues: Serine acetyltransferase (216 aa).

This sequence belongs to the transferase hexapeptide repeat family.

The protein localises to the cytoplasm. The enzyme catalyses L-serine + acetyl-CoA = O-acetyl-L-serine + CoA. The protein operates within amino-acid biosynthesis; L-cysteine biosynthesis; L-cysteine from L-serine: step 1/2. Inhibited by cysteine. Its function is as follows. Catalyzes the acetylation of serine by acetyl-CoA to produce O-acetylserine (OAS). The polypeptide is Serine acetyltransferase (Bacillus licheniformis (strain ATCC 14580 / DSM 13 / JCM 2505 / CCUG 7422 / NBRC 12200 / NCIMB 9375 / NCTC 10341 / NRRL NRS-1264 / Gibson 46)).